Here is a 192-residue protein sequence, read N- to C-terminus: ADP-ribosylation factor-like protein 4C (192 aa).

The N-myristoyl glycine moiety is linked to residue G2. GTP is bound by residues 20-27 (GLDSAGKT), 68-72 (DVGGQ), and 127-130 (NKQD).

This sequence belongs to the small GTPase superfamily. Arf family. As to quaternary structure, interacts with CYTH2. Interacts with alpha tubulin; interaction is independent on the ARL4C GTP or GDP binding status. Expressed in several tumor cell lines (at protein level). Expressed in lung, brain, leukocytes and placenta.

The protein resides in the cell projection. Its subcellular location is the filopodium. It is found in the cell membrane. The protein localises to the cytoplasm. Small GTP-binding protein which cycles between an inactive GDP-bound and an active GTP-bound form, and the rate of cycling is regulated by guanine nucleotide exchange factors (GEF) and GTPase-activating proteins (GAP). GTP-binding protein that does not act as an allosteric activator of the cholera toxin catalytic subunit. May be involved in transport between a perinuclear compartment and the plasma membrane, apparently linked to the ABCA1-mediated cholesterol secretion pathway. Recruits CYTH1, CYTH2, CYTH3 and CYTH4 to the plasma membrane in the GDP-bound form. Regulates the microtubule-dependent intracellular vesicular transport from early endosome to recycling endosome process. This is ADP-ribosylation factor-like protein 4C (ARL4C) from Homo sapiens (Human).